A 1253-amino-acid polypeptide reads, in one-letter code: Latent-transforming growth factor beta-binding protein 3 (1253 aa).

The first 38 residues, 1–38 (MPGPRGAAHGLAPAMRQAGALGLLALLLLALLGPGGGA), serve as a signal peptide directing secretion. The N-linked (GlcNAc...) asparagine glycan is linked to Asn86. The EGF-like 1 domain maps to 106–138 (RVVVCPLPCMNGGQCSSRNQCLCPPDFTGRFCQ). 3 cysteine pairs are disulfide-bonded: Cys110–Cys120, Cys114–Cys126, and Cys128–Cys137. The interval 244-270 (GPNAEGPASSQHLLPHPKPQHPRPPTQ) is disordered. The TB 1 domain maps to 274 to 328 (GRCFQDTLPKQPCGSNPLPGLTKQEDCCGSIGTAWGQSKCHKCPQLQYTGVQKPG). Disulfide bonds link Cys276-Cys300, Cys286-Cys313, and Cys301-Cys316. Residue Asn346 is glycosylated (N-linked (GlcNAc...) asparagine). Positions 352–392 (DINECAMPGMCRHGDCLNNPGSYRCVCPPGHSLGPSRTQCI) constitute an EGF-like 2; calcium-binding domain. 7 disulfides stabilise this stretch: Cys356–Cys367, Cys362–Cys376, Cys378–Cys391, Cys402–Cys425, Cys412–Cys437, Cys426–Cys440, and Cys427–Cys452. Residues 400–452 (SLCFRLVSTEHQCQHPLTTRLTRQLCCCSVGKAWGARCQRCPADGTAAFKEIC) enclose the TB 2 domain. Residues 475–555 (FSLFLHPDGP…PTFHRFLPDL (81 aa)) form a disordered region. The 42-residue stretch at 571 to 612 (ETDECRLNQNICGHGQCVPGPSDYSCHCNAGYRSHPQHRYCV) folds into the EGF-like 3 domain. Cystine bridges form between Cys575/Cys587, Cys582/Cys596, Cys598/Cys611, Cys617/Cys629, Cys622/Cys638, Cys661/Cys673, Cys667/Cys682, Cys684/Cys698, Cys745/Cys756, Cys751/Cys765, Cys767/Cys780, Cys786/Cys797, Cys792/Cys806, Cys808/Cys821, Cys827/Cys838, Cys833/Cys847, Cys849/Cys861, Cys867/Cys880, Cys874/Cys889, Cys891/Cys904, Cys916/Cys939, Cys926/Cys951, Cys940/Cys956, Cys941/Cys968, Cys994/Cys1007, Cys1002/Cys1016, Cys1018/Cys1031, Cys1037/Cys1048, Cys1043/Cys1057, Cys1059/Cys1072, Cys1113/Cys1127, and Cys1114/Cys1136. One can recognise an EGF-like 4; calcium-binding domain in the interval 613–656 (DVNECEAEPCGPGKGICMNTGGSYNCHCNRGYRLHVGAGGRSCV). Residues 657 to 699 (DLNECTKPHLCGDGGFCINFPGHYKCNCYPGYRLKASRPPICE) form the EGF-like 5; calcium-binding domain. The EGF-like 6; calcium-binding domain maps to 741–781 (DVNECSEGTPCSPGWCENLPGSYRCTCAQGYEPAQDGLSCI). The EGF-like 7; calcium-binding domain occupies 782-822 (DVDECEAGKVCQDGICTNTPGSFQCQCLSGYHLSRDRSRCE). The EGF-like 8; calcium-binding domain maps to 823-861 (DIDECDFPAACIGGDCINTNGSYRCLCPQGHRLVGGRKC). An N-linked (GlcNAc...) asparagine glycan is attached at Asn842. One can recognise an EGF-like 9; calcium-binding domain in the interval 863–905 (DIDECSQDPGLCLPHGACENLQGSYVCVCDEGFTLTQDQHGCE). Residues 914-968 (KECYLNFDDTVFCDSVLATNVTQQECCCSLGAGWGDHCEIYPCPVYSSAEFHSLC) form the TB 3 domain. A glycan (N-linked (GlcNAc...) asparagine) is linked at Asn933. Positions 990–1032 (DIDECILFGAEICKEGKCVNTQPGYECYCKQGFYYDGNLLECV) constitute an EGF-like 10; calcium-binding domain. Residues 1033-1072 (DVDECLDESNCRNGVCENTRGGYRCACTPPAEYSPAQRQC) form the EGF-like 11; calcium-binding domain. Residues 1086 to 1136 (EVCWGQRGEDGMCMGPLAGPALTFDDCCCRQGRGWGTQCRPCPPRGTGSQC) enclose the TB 4 domain. Residues 1138–1148 (TSQSESNSFWD) are compositionally biased toward polar residues. Positions 1138–1169 (TSQSESNSFWDTSPLLLGKSPRDEDSSEEDSD) are disordered. The EGF-like 12; calcium-binding domain occupies 1204-1231 (DIDECRELNQRGLLCKSERCVNTSGSFR). 2 cysteine pairs are disulfide-bonded: Cys1208–Cys1223 and Cys1218–Cys1232. Asn1225 is a glycosylation site (N-linked (GlcNAc...) asparagine).

It belongs to the LTBP family. Forms part of the large latent transforming growth factor beta (TGFB1) precursor complex; removal is essential for activation of complex. Interacts with EFEMP2. Post-translationally, contains hydroxylated asparagine residues. Two intrachain disulfide bonds from the TB3 domain are rearranged upon TGFB1 binding, and form interchain bonds with TGFB1 propeptide, anchoring it to the extracellular matrix.

It localises to the secreted. It is found in the extracellular space. Its subcellular location is the extracellular matrix. Its function is as follows. Key regulator of transforming growth factor beta (TGFB1, TGFB2 and TGFB3) that controls TGF-beta activation by maintaining it in a latent state during storage in extracellular space. Associates specifically via disulfide bonds with the Latency-associated peptide (LAP), which is the regulatory chain of TGF-beta, and regulates integrin-dependent activation of TGF-beta. The protein is Latent-transforming growth factor beta-binding protein 3 (Ltbp3) of Mus musculus (Mouse).